Reading from the N-terminus, the 36-residue chain is Photosystem I reaction center subunit VIII (36 aa).

Residues 9 to 29 (ILVPLVGLVFPAITMVSLFLY) form a helical membrane-spanning segment.

Belongs to the PsaI family.

The protein resides in the plastid. The protein localises to the chloroplast thylakoid membrane. Functionally, may help in the organization of the PsaL subunit. This Zygnema circumcarinatum (Green alga) protein is Photosystem I reaction center subunit VIII.